A 370-amino-acid polypeptide reads, in one-letter code: Putative F-box protein At1g46984 (370 aa).

In terms of domain architecture, F-box spans Y18–F64.

The sequence is that of Putative F-box protein At1g46984 from Arabidopsis thaliana (Mouse-ear cress).